We begin with the raw amino-acid sequence, 85 residues long: UPF0291 protein SSA_1878 (85 aa).

The disordered stretch occupies residues 58–85 (GNDVTPEKLRQVQREKGLHGRSLDDPES). Positions 62–85 (TPEKLRQVQREKGLHGRSLDDPES) are enriched in basic and acidic residues.

This sequence belongs to the UPF0291 family.

It localises to the cytoplasm. In Streptococcus sanguinis (strain SK36), this protein is UPF0291 protein SSA_1878.